A 745-amino-acid polypeptide reads, in one-letter code: MSAEQPTIIYTLTDEAPLLATYAFLPIVRAFAEPAGIKIEASDISVAARILAEFPDYLTEEQRVPDNLAELGRLTQLPDTNIIKLPNISASVPQLVAAIKELQDKGYAVPDYPADPKTDQEKAIKERYARCLGSAVNPVLRQGNSDRRAPKAVKEYARKHPHSMGEWSMASRTHVAHMRHGDFYAGEKSMTLDRARNVRMELLAKSGKTIVLKPEVPLDDGDVIDSMFMSKKALCDFYEEQMQDAFETGVMFSLHVKATMMKVSHPIVFGHAVRIFYKDAFAKHQELFDDLGVNVNNGLSDLYSKIESLPASQRDEIIEDLHRCHEHRPELAMVDSARGISNFHSPSDVIVDASMPAMIRAGGKMYGADGKLKDTKAVNPESTFSRIYQEIINFCKTNGQFDPTTMGTVPNVGLMAQQAEEYGSHDKTFEIPEDGVANIVDVATGEVLLTENVEAGDIWRMCIVKDAPIRDWVKLAVTRARISGMPVLFWLDPYRPHENELIKKVKTYLKDHDTEGLDIQIMSQVRSMRYTCERLVRGLDTIAATGNILRDYLTDLFPILELGTSAKMLSVVPLMAGGGMYETGAGGSAPKHVKQLVEENHLRWDSLGEFLALGAGFEDIGIKTGNERAKLLGKTLDAAIGKLLDNDKSPSRKTGELDNRGSQFYLAMYWAQELAAQTDDQQLAEHFASLADVLTKNEDVIVRELTEVQGEPVDIGGYYAPDSDMTTAVMRPSKTFNAALEAVQG.

Residues asparagine 87 and serine 89 each contribute to the NADP(+) site. Residues serine 134, asparagine 137, arginine 141, arginine 147, and lysine 257 each contribute to the D-threo-isocitrate site. Aspartate 352 serves as a coordination point for Mg(2+). Positions 422 and 550 each coordinate D-threo-isocitrate. 2 residues coordinate Mg(2+): aspartate 551 and aspartate 555. Positions 587, 588, 589, 592, 603, 605, and 652 each coordinate NADP(+).

This sequence belongs to the monomeric-type IDH family. May form homotrimers. Also forms homotetramers at low salt concentration, which are dissociated into homodimers, but not into monomers, at high salt concentration (1 M). Mg(2+) serves as cofactor.

The catalysed reaction is D-threo-isocitrate + NADP(+) = 2-oxoglutarate + CO2 + NADPH. Functionally, catalyzes the oxidative decarboxylation of isocitrate to 2-oxoglutarate and carbon dioxide with the concomitant reduction of NADP(+). Cannot use NAD(+). The polypeptide is Isocitrate dehydrogenase [NADP] 2 (Mycobacterium tuberculosis (strain ATCC 25618 / H37Rv)).